The chain runs to 159 residues: MRIGHGFDVHAFGGEGPIIIGGVRIPYDKGLLAHSDGDVALHALTDALLGAAALGDIGKLFPDTDPAFKGADSRELLREAWRRIQAKGYTLGNVDVTIIAQAPKMLPHIPQMRVFIAEDLGCHMDDVNVKATTTEKLGFTGRGEGIACEAVALLIKAAK.

A divalent metal cation is bound by residues Asp-8 and His-10. 4-CDP-2-C-methyl-D-erythritol 2-phosphate-binding positions include 8-10 (DVH) and 34-35 (HS). His-42 is a binding site for a divalent metal cation. Residues 56 to 58 (DIG), 61 to 65 (FPDTD), 100 to 106 (AQAPKML), 132 to 135 (TTTE), Phe-139, and Arg-142 contribute to the 4-CDP-2-C-methyl-D-erythritol 2-phosphate site.

This sequence belongs to the IspF family. In terms of assembly, homotrimer. The cofactor is a divalent metal cation.

It catalyses the reaction 4-CDP-2-C-methyl-D-erythritol 2-phosphate = 2-C-methyl-D-erythritol 2,4-cyclic diphosphate + CMP. Its pathway is isoprenoid biosynthesis; isopentenyl diphosphate biosynthesis via DXP pathway; isopentenyl diphosphate from 1-deoxy-D-xylulose 5-phosphate: step 4/6. Functionally, involved in the biosynthesis of isopentenyl diphosphate (IPP) and dimethylallyl diphosphate (DMAPP), two major building blocks of isoprenoid compounds. Catalyzes the conversion of 4-diphosphocytidyl-2-C-methyl-D-erythritol 2-phosphate (CDP-ME2P) to 2-C-methyl-D-erythritol 2,4-cyclodiphosphate (ME-CPP) with a corresponding release of cytidine 5-monophosphate (CMP). The sequence is that of 2-C-methyl-D-erythritol 2,4-cyclodiphosphate synthase from Citrobacter koseri (strain ATCC BAA-895 / CDC 4225-83 / SGSC4696).